Consider the following 421-residue polypeptide: Phosphoglycerate kinase, cytosolic (421 aa).

Residues Val23, Asp24, Phe25, Asn26, Arg39, Ser61, His62, Gly64, Arg65, Arg135, His172, and Arg173 each coordinate (2R)-3-phosphoglycerate. ADP contacts are provided by Gly218 and Ala219. CDP is bound at residue Gly218. AMP is bound by residues Ala219 and Lys220. Ala219 is an ATP binding site. Ala219 contacts Mg(2+). Position 220 (Lys220) interacts with (2R)-3-phosphoglycerate. Asp223 provides a ligand contact to CDP. Residue Asp223 coordinates Mg(2+). ADP-binding residues include Lys224 and Gly242. Lys224 contributes to the AMP binding site. An ATP-binding site is contributed by Lys224. Position 242 (Gly242) interacts with CDP. 2 residues coordinate AMP: Ala243 and Ala315. The ATP site is built by Ala243 and Ala315. Residues Ala315 and Asn339 each coordinate ADP. The CDP site is built by Gly340 and Phe345. ADP contacts are provided by Phe345, Glu346, Asp378, and Ser379. Glu346 contributes to the AMP binding site. Residues Glu346, Asp378, and Ser379 each coordinate ATP. Asp378 serves as a coordination point for Mg(2+).

Belongs to the phosphoglycerate kinase family. Monomer. The cofactor is Mg(2+).

The protein resides in the cytoplasm. It carries out the reaction (2R)-3-phosphoglycerate + ATP = (2R)-3-phospho-glyceroyl phosphate + ADP. The protein operates within carbohydrate degradation; glycolysis; pyruvate from D-glyceraldehyde 3-phosphate: step 2/5. In Trypanosoma brucei brucei, this protein is Phosphoglycerate kinase, cytosolic.